We begin with the raw amino-acid sequence, 426 residues long: Glutamate-1-semialdehyde 2,1-aminomutase (426 aa).

Residue lysine 265 is modified to N6-(pyridoxal phosphate)lysine.

The protein belongs to the class-III pyridoxal-phosphate-dependent aminotransferase family. HemL subfamily. As to quaternary structure, homodimer. Pyridoxal 5'-phosphate is required as a cofactor.

The protein localises to the cytoplasm. It catalyses the reaction (S)-4-amino-5-oxopentanoate = 5-aminolevulinate. Its pathway is porphyrin-containing compound metabolism; protoporphyrin-IX biosynthesis; 5-aminolevulinate from L-glutamyl-tRNA(Glu): step 2/2. In Halorhodospira halophila (strain DSM 244 / SL1) (Ectothiorhodospira halophila (strain DSM 244 / SL1)), this protein is Glutamate-1-semialdehyde 2,1-aminomutase.